The primary structure comprises 802 residues: Protein enabled homolog (802 aa).

Positions 1–111 (MSEQSICQAR…SAMMHALEVL (111 aa)) constitute a WH1 domain. Polar residues predominate over residues 143–155 (NSQLPAQVQNGPS). Residues 143-166 (NSQLPAQVQNGPSQEELEIQRRQL) are disordered. The residue at position 144 (serine 144) is a Phosphoserine. The stretch at 154–258 (PSQEELEIQR…ERERRMSNAA (105 aa)) forms a coiled coil. A run of 7 repeats spans residues 175–179 (LERER), 180–184 (MERER), 185–189 (LERER), 190–194 (LERER), 195–199 (LERER), 200–204 (LEQEQ), and 205–209 (LERQR). Residues 175-209 (LERERMERERLERERLERERLERERLEQEQLERQR) are 7 X 5 AA tandem repeats of [LM]-E-[QR]-[EQ]-[QR]. Basic and acidic residues predominate over residues 245–254 (QVEWERERRM). Disordered stretches follow at residues 245–287 (QVEW…PSYA) and 341–622 (ATVP…RPLT). The residue at position 255 (serine 255) is a Phosphoserine; by PKA. Low complexity predominate over residues 255 to 278 (SNAAPSSDSSLSSAPLPEYSSCQP). The segment covering 348 to 361 (NKNSRPSSPVNTPS) has biased composition (polar residues). At serine 383 the chain carries Phosphoserine. The span at 386 to 410 (IMISSPPGKATGPRPVLPVCVSSPV) shows a compositional bias: low complexity. Positions 431–464 (VSPPPTSGPAAPPPPPPPPPPPPPPPLPPPPLPP) are enriched in pro residues. The segment covering 485–505 (STPSSKPSVLPSPSAGAPASA) has biased composition (low complexity). Residues 525–535 (AASQPAESPTP) show a composition bias toward polar residues. Residues 542–553 (PPAPPPPPPLPS) are compositionally biased toward pro residues. Tyrosine 557 carries the phosphotyrosine modification. Residues 561–605 (LPPPPGPPPPPPLPSTGPPPPPPPPPPLPNQAPPPPPPPPAPPLP) show a composition bias toward pro residues. Residues 623–643 (GLAAAIAGAKLRKVSRVEDGS) are EVH2 block A. An EVH2 region spans residues 623–799 (GLAAAIAGAK…DAIRQELSKS (177 aa)). Positions 632–635 (KLRK) match the KLKR motif. 2 disordered regions span residues 639–675 (VEDG…GGSG) and 691–764 (AEKG…TEGL). The span at 664–675 (RGNGPLPLGGSG) shows a compositional bias: gly residues. Residues 674 to 691 (SGLMEEMSALLARRRRIA) form an EVH2 block B region. Over residues 731–760 (RTNTMNGSKSPVISRPKSTPSSQPSANGVQ) the composition is skewed to polar residues. 2 positions are modified to phosphoserine: serine 738 and serine 740. The segment at 765 to 799 (DYDRLKQDILDEMRKELAKLKEELIDAIRQELSKS) is EVH2 block C. Residues 767–797 (DRLKQDILDEMRKELAKLKEELIDAIRQELS) are a coiled coil.

Belongs to the Ena/VASP family. As to quaternary structure, homotetramer. Interacts with APBB1IP, APBB1, PFN1 and ROBO4. Isoforms, containing the polyproline-rich regions with PPLP motifs, bind the WW domain of APBB1IP. Isoforms, containing the PPSY motif, bind, in vitro, to the WW2 and WW3 domains of NEDD4 and to the WW1 domain of YAP1. Binds the SH3 domain of BAIAP2-alpha but only after the autoinhibitory region of BAIAP2-alpha has been blocked by interaction with CDC42. Interacts, via the EVH1/WH1 domain, with the Pro-rich domains from VCL, ZYX and Listeria monocytogenes actA and with TES (via LIM domain). The TES LIM domain and the Pro-rich domains from VCL or ZYX compete for the same binding site. Interaction with ZYX is important for targeting ENAH to focal adhesions and enhances production of actin-rich structures at the apical surface of cells. Binds GPHN. Heterotrimer with TES and ACTL7A. Interacts with FAT1 (via EVH1 domains). Interacts, through the Pro-rich region, with the C-terminal SH3 domain of DNMPB. Interacts with PRPF40A. Post-translationally, NTN1-induced PKA phosphorylation on Ser-255 directly parallels the formation of filopodial protrusions. Expressed in heart and testis, lower levels in lung, skeletal muscle, kidney, pancreas and brain. Isoform 5 is expressed exclusively in the brain. Isoform 2 is expressed predominantly in brain, testis, ovary and fat. In the brain, isoforms 2 and 5 are expressed at highest levels in the hippocampus, cortex and midbrain, and at lowest levels in the striatum and cerebellum. Isoform 6 is expressed in brain and spleen.

It localises to the cytoplasm. It is found in the cytoskeleton. The protein localises to the cell projection. The protein resides in the lamellipodium. Its subcellular location is the filopodium. It localises to the synapse. It is found in the cell junction. The protein localises to the focal adhesion. Ena/VASP proteins are actin-associated proteins involved in a range of processes dependent on cytoskeleton remodeling and cell polarity such as axon guidance and lamellipodial and filopodial dynamics in migrating cells. ENAH induces the formation of F-actin rich outgrowths in fibroblasts. Acts synergistically with BAIAP2-alpha and downstream of NTN1 to promote filipodia formation. The protein is Protein enabled homolog (Enah) of Mus musculus (Mouse).